We begin with the raw amino-acid sequence, 155 residues long: 6,7-dimethyl-8-ribityllumazine synthase (155 aa).

5-amino-6-(D-ribitylamino)uracil contacts are provided by residues Phe24, 58-60, and 82-84; these read AFE and VII. 87–88 contacts (2S)-2-hydroxy-3-oxobutyl phosphate; it reads ST. His90 (proton donor) is an active-site residue. A 5-amino-6-(D-ribitylamino)uracil-binding site is contributed by Phe115. Arg129 is a (2S)-2-hydroxy-3-oxobutyl phosphate binding site.

This sequence belongs to the DMRL synthase family.

It carries out the reaction (2S)-2-hydroxy-3-oxobutyl phosphate + 5-amino-6-(D-ribitylamino)uracil = 6,7-dimethyl-8-(1-D-ribityl)lumazine + phosphate + 2 H2O + H(+). The protein operates within cofactor biosynthesis; riboflavin biosynthesis; riboflavin from 2-hydroxy-3-oxobutyl phosphate and 5-amino-6-(D-ribitylamino)uracil: step 1/2. Its function is as follows. Catalyzes the formation of 6,7-dimethyl-8-ribityllumazine by condensation of 5-amino-6-(D-ribitylamino)uracil with 3,4-dihydroxy-2-butanone 4-phosphate. This is the penultimate step in the biosynthesis of riboflavin. This chain is 6,7-dimethyl-8-ribityllumazine synthase, found in Pelodictyon phaeoclathratiforme (strain DSM 5477 / BU-1).